The chain runs to 417 residues: Serine hydroxymethyltransferase (417 aa).

At K54 the chain carries N6-acetyllysine. Residues L121 and 125 to 127 (GHL) each bind (6S)-5,6,7,8-tetrahydrofolate. Position 229 is an N6-(pyridoxal phosphate)lysine (K229). N6-acetyllysine occurs at positions 250, 285, and 354. A (6S)-5,6,7,8-tetrahydrofolate-binding site is contributed by 355–357 (SPF). K375 bears the N6-acetyllysine mark.

The protein belongs to the SHMT family. In terms of assembly, homodimer. Requires pyridoxal 5'-phosphate as cofactor.

It localises to the cytoplasm. The enzyme catalyses (6R)-5,10-methylene-5,6,7,8-tetrahydrofolate + glycine + H2O = (6S)-5,6,7,8-tetrahydrofolate + L-serine. Its pathway is one-carbon metabolism; tetrahydrofolate interconversion. The protein operates within amino-acid biosynthesis; glycine biosynthesis; glycine from L-serine: step 1/1. Its function is as follows. Catalyzes the reversible interconversion of serine and glycine with tetrahydrofolate (THF) serving as the one-carbon carrier. This reaction serves as the major source of one-carbon groups required for the biosynthesis of purines, thymidylate, methionine, and other important biomolecules. Also exhibits THF-independent aldolase activity toward beta-hydroxyamino acids, producing glycine and aldehydes, via a retro-aldol mechanism. This Escherichia coli O157:H7 protein is Serine hydroxymethyltransferase.